The following is a 234-amino-acid chain: Opacity protein opA65 (234 aa).

Alanine 1 is a signal peptide. A disordered region spans residues 154 to 179; that stretch reads TVTPKPKNGTQGGPVKSTSPIPAYHE.

Belongs to the opacity porin family.

Its subcellular location is the cell outer membrane. Its function is as follows. Implicated in a number of adherence functions. OPA proteins are implicated in pathogenesis and are subject to phase variation. The chain is Opacity protein opA65 from Neisseria gonorrhoeae.